The following is a 429-amino-acid chain: Serine--tRNA ligase (429 aa).

234–236 (TSE) lines the L-serine pocket. ATP is bound by residues 265–267 (RKE) and Val281. Glu288 lines the L-serine pocket. 352–355 (ELVS) serves as a coordination point for ATP. Thr389 provides a ligand contact to L-serine.

The protein belongs to the class-II aminoacyl-tRNA synthetase family. Type-1 seryl-tRNA synthetase subfamily. As to quaternary structure, homodimer. The tRNA molecule probably binds across the dimer.

It carries out the reaction tRNA(Ser) + L-serine + ATP = L-seryl-tRNA(Ser) + AMP + diphosphate + H(+). The catalysed reaction is tRNA(Sec) + L-serine + ATP = L-seryl-tRNA(Sec) + AMP + diphosphate + H(+). It functions in the pathway aminoacyl-tRNA biosynthesis; selenocysteinyl-tRNA(Sec) biosynthesis; L-seryl-tRNA(Sec) from L-serine and tRNA(Sec): step 1/1. Catalyzes the attachment of serine to tRNA(Ser). Is also probably able to aminoacylate tRNA(Sec) with serine, to form the misacylated tRNA L-seryl-tRNA(Sec), which will be further converted into selenocysteinyl-tRNA(Sec). In Encephalitozoon cuniculi (strain GB-M1) (Microsporidian parasite), this protein is Serine--tRNA ligase.